We begin with the raw amino-acid sequence, 468 residues long: Sorting and assembly machinery component 50 homolog A (468 aa).

The segment at methionine 1–aspartate 24 is disordered. The POTRA domain occupies valine 44 to leucine 124.

The protein belongs to the SAM50/omp85 family. Associates with the mitochondrial contact site and cristae organizing system (MICOS) complex (also known as MINOS or MitOS complex).

The protein resides in the mitochondrion outer membrane. May play a role in the maintenance of the structure of mitochondrial cristae. This Xenopus laevis (African clawed frog) protein is Sorting and assembly machinery component 50 homolog A (samm50-a).